The primary structure comprises 277 residues: Large ribosomal subunit protein mL46 (277 aa).

At K217 the chain carries N6-succinyllysine. The residue at position 228 (K228) is an N6-acetyllysine. K246 carries the N6-succinyllysine modification.

This sequence belongs to the mitochondrion-specific ribosomal protein mL46 family. As to quaternary structure, component of the mitochondrial ribosome large subunit (39S) which comprises a 16S rRNA and about 50 distinct proteins.

The protein resides in the mitochondrion. This chain is Large ribosomal subunit protein mL46 (Mrpl46), found in Rattus norvegicus (Rat).